The following is a 551-amino-acid chain: Eukaryotic translation initiation factor 3 subunit D-2 (551 aa).

The interval 108 to 152 (RARGRTGRGNATLGGLGGPVAGGSTANSTKYGKGRNTRNAQNMGR) is disordered. A compositionally biased stretch (gly residues) spans 119 to 128 (TLGGLGGPVA). An RNA gate region spans residues 290–304 (QFDLLTVNETSLEPP). The disordered stretch occupies residues 530 to 551 (AFDSDGDDESESSEPFGNSIDN). Residues 531–541 (FDSDGDDESES) are compositionally biased toward acidic residues.

Belongs to the eIF-3 subunit D family. As to quaternary structure, component of the eukaryotic translation initiation factor 3 (eIF-3) complex. The eIF-3 complex interacts with pix.

The protein resides in the cytoplasm. Functionally, mRNA cap-binding component of the eukaryotic translation initiation factor 3 (eIF-3) complex, which is involved in protein synthesis of a specialized repertoire of mRNAs and, together with other initiation factors, stimulates binding of mRNA and methionyl-tRNAi to the 40S ribosome. The eIF-3 complex specifically targets and initiates translation of a subset of mRNAs involved in cell proliferation. In the eIF-3 complex, eif3d specifically recognizes and binds the 7-methylguanosine cap of a subset of mRNAs. The polypeptide is Eukaryotic translation initiation factor 3 subunit D-2 (Drosophila yakuba (Fruit fly)).